We begin with the raw amino-acid sequence, 469 residues long: A-type ATP synthase subunit B (469 aa).

Belongs to the ATPase alpha/beta chains family. In terms of assembly, has multiple subunits with at least A(3), B(3), C, D, E, F, H, I and proteolipid K(x).

It is found in the cell membrane. Its function is as follows. Component of the A-type ATP synthase that produces ATP from ADP in the presence of a proton gradient across the membrane. The B chain is a regulatory subunit. In Staphylothermus marinus (strain ATCC 43588 / DSM 3639 / JCM 9404 / F1), this protein is A-type ATP synthase subunit B.